The primary structure comprises 255 residues: 5'-nucleotidase SurE (255 aa).

Residues D8, D9, S39, and N91 each coordinate a divalent metal cation.

This sequence belongs to the SurE nucleotidase family. The cofactor is a divalent metal cation.

The protein resides in the cytoplasm. The enzyme catalyses a ribonucleoside 5'-phosphate + H2O = a ribonucleoside + phosphate. Functionally, nucleotidase that shows phosphatase activity on nucleoside 5'-monophosphates. The protein is 5'-nucleotidase SurE of Acinetobacter baumannii (strain SDF).